The chain runs to 359 residues: Dual-specificity RNA methyltransferase RlmN 1 (359 aa).

Glu-96 serves as the catalytic Proton acceptor. One can recognise a Radical SAM core domain in the interval 102-335 (FKGRATVCIS…STVRQRRGID (234 aa)). Cys-109 and Cys-340 form a disulfide bridge. [4Fe-4S] cluster-binding residues include Cys-116, Cys-120, and Cys-123. S-adenosyl-L-methionine-binding positions include 166–167 (GE), Ser-198, 221–223 (SLH), and Asn-297. Catalysis depends on Cys-340, which acts as the S-methylcysteine intermediate.

Belongs to the radical SAM superfamily. RlmN family. [4Fe-4S] cluster is required as a cofactor.

It localises to the cytoplasm. It carries out the reaction adenosine(2503) in 23S rRNA + 2 reduced [2Fe-2S]-[ferredoxin] + 2 S-adenosyl-L-methionine = 2-methyladenosine(2503) in 23S rRNA + 5'-deoxyadenosine + L-methionine + 2 oxidized [2Fe-2S]-[ferredoxin] + S-adenosyl-L-homocysteine. The catalysed reaction is adenosine(37) in tRNA + 2 reduced [2Fe-2S]-[ferredoxin] + 2 S-adenosyl-L-methionine = 2-methyladenosine(37) in tRNA + 5'-deoxyadenosine + L-methionine + 2 oxidized [2Fe-2S]-[ferredoxin] + S-adenosyl-L-homocysteine. Functionally, specifically methylates position 2 of adenine 2503 in 23S rRNA and position 2 of adenine 37 in tRNAs. m2A2503 modification seems to play a crucial role in the proofreading step occurring at the peptidyl transferase center and thus would serve to optimize ribosomal fidelity. In Myxococcus xanthus (strain DK1622), this protein is Dual-specificity RNA methyltransferase RlmN 1.